The primary structure comprises 155 residues: Large ribosomal subunit protein uL22c (155 aa).

It belongs to the universal ribosomal protein uL22 family. In terms of assembly, part of the 50S ribosomal subunit.

It localises to the plastid. Its subcellular location is the chloroplast. This protein binds specifically to 23S rRNA. Its function is as follows. The globular domain of the protein is located near the polypeptide exit tunnel on the outside of the subunit, while an extended beta-hairpin is found that lines the wall of the exit tunnel in the center of the 70S ribosome. The protein is Large ribosomal subunit protein uL22c (rpl22) of Nicotiana sylvestris (Wood tobacco).